The following is a 235-amino-acid chain: Peptidyl-tRNA hydrolase (235 aa).

Tyr-14 lines the tRNA pocket. His-19 acts as the Proton acceptor in catalysis. The tRNA site is built by Phe-64, Asn-66, and Asn-112. A disordered region spans residues 186–235; it reads RTAPPRSSGGSPKTDKPAKATREPPPAAKPEATPEEETRSPLQRLVDKFR. Residues 198 to 207 show a composition bias toward basic and acidic residues; sequence KTDKPAKATR.

It belongs to the PTH family. Monomer.

The protein resides in the cytoplasm. The catalysed reaction is an N-acyl-L-alpha-aminoacyl-tRNA + H2O = an N-acyl-L-amino acid + a tRNA + H(+). Functionally, hydrolyzes ribosome-free peptidyl-tRNAs (with 1 or more amino acids incorporated), which drop off the ribosome during protein synthesis, or as a result of ribosome stalling. Catalyzes the release of premature peptidyl moieties from peptidyl-tRNA molecules trapped in stalled 50S ribosomal subunits, and thus maintains levels of free tRNAs and 50S ribosomes. The protein is Peptidyl-tRNA hydrolase of Dinoroseobacter shibae (strain DSM 16493 / NCIMB 14021 / DFL 12).